A 577-amino-acid polypeptide reads, in one-letter code: DEAD-box ATP-dependent RNA helicase 22 (577 aa).

A Q motif motif is present at residues 82 to 110; that stretch reads TSWESLGVSDRLASALHGAGLARPSLVQA. One can recognise a Helicase ATP-binding domain in the interval 113–375; sequence IPHVLTTNDV…GGVLKRMFPN (263 aa). 126–133 is an ATP binding site; sequence AETGSGKT. Positions 249–252 match the DEAD box motif; that stretch reads DEAD. The tract at residues 288–317 is disordered; the sequence is SLGDTNEYREDSDSQSAELSADDEENEDGL. A Helicase C-terminal domain is found at 407–568; it reads LLDAVKYGLK…SFRNKLKKQA (162 aa).

It belongs to the DEAD box helicase family.

It carries out the reaction ATP + H2O = ADP + phosphate + H(+). This chain is DEAD-box ATP-dependent RNA helicase 22, found in Oryza sativa subsp. japonica (Rice).